The following is a 558-amino-acid chain: Formate--tetrahydrofolate ligase (558 aa).

ATP is bound at residue 67–74 (TPAGEGKT).

Belongs to the formate--tetrahydrofolate ligase family.

It catalyses the reaction (6S)-5,6,7,8-tetrahydrofolate + formate + ATP = (6R)-10-formyltetrahydrofolate + ADP + phosphate. Its pathway is one-carbon metabolism; tetrahydrofolate interconversion. The sequence is that of Formate--tetrahydrofolate ligase from Ruegeria pomeroyi (strain ATCC 700808 / DSM 15171 / DSS-3) (Silicibacter pomeroyi).